The sequence spans 445 residues: Phosphoglucosamine mutase (445 aa).

Ser-101 serves as the catalytic Phosphoserine intermediate. Mg(2+) is bound by residues Ser-101, Asp-240, Asp-242, and Asp-244. Ser-101 bears the Phosphoserine mark.

Belongs to the phosphohexose mutase family. Mg(2+) is required as a cofactor. In terms of processing, activated by phosphorylation.

The enzyme catalyses alpha-D-glucosamine 1-phosphate = D-glucosamine 6-phosphate. Catalyzes the conversion of glucosamine-6-phosphate to glucosamine-1-phosphate. The chain is Phosphoglucosamine mutase from Pseudomonas fluorescens (strain Pf0-1).